Consider the following 359-residue polypeptide: Centromere-binding protein 1 (359 aa).

The tract at residues methionine 1–arginine 262 is disordered. Residues lysine 55–serine 78 are compositionally biased toward basic and acidic residues. Residues glycine 120–aspartate 161 are compositionally biased toward acidic residues. Residues glutamine 249 to arginine 259 show a composition bias toward basic and acidic residues. Residues glutamine 249–methionine 297 form the bHLH domain.

Binds DNA as a dimer.

It localises to the nucleus. It is found in the chromosome. The protein resides in the centromere. Required for chromosome stability and methionine prototrophy. It is involved in chromosomal segregation. Binds to a highly conserved DNA sequence (5'-RTCACRTG-3'), called CDEI, found in centromeres and in several promoters. The chain is Centromere-binding protein 1 (CBF1) from Kluyveromyces lactis (strain ATCC 8585 / CBS 2359 / DSM 70799 / NBRC 1267 / NRRL Y-1140 / WM37) (Yeast).